The primary structure comprises 450 residues: Bifunctional protein GlmU (450 aa).

The pyrophosphorylase stretch occupies residues Met-1–Arg-229. Residues Leu-8–Gly-11, Lys-22, Gln-72, and Gly-77–Thr-78 each bind UDP-N-acetyl-alpha-D-glucosamine. Mg(2+) is bound at residue Asp-102. 3 residues coordinate UDP-N-acetyl-alpha-D-glucosamine: Gly-139, Glu-154, and Asn-227. A Mg(2+)-binding site is contributed by Asn-227. Positions Val-230–Asn-250 are linker. The segment at Gly-251–Lys-450 is N-acetyltransferase. UDP-N-acetyl-alpha-D-glucosamine is bound by residues Arg-332 and Lys-350. Catalysis depends on His-362, which acts as the Proton acceptor. UDP-N-acetyl-alpha-D-glucosamine is bound by residues Tyr-365 and Asn-376. Residues Asn-385 to Tyr-386, Ala-422, and Arg-439 each bind acetyl-CoA.

It in the N-terminal section; belongs to the N-acetylglucosamine-1-phosphate uridyltransferase family. In the C-terminal section; belongs to the transferase hexapeptide repeat family. As to quaternary structure, homotrimer. Mg(2+) serves as cofactor.

The protein resides in the cytoplasm. It carries out the reaction alpha-D-glucosamine 1-phosphate + acetyl-CoA = N-acetyl-alpha-D-glucosamine 1-phosphate + CoA + H(+). It catalyses the reaction N-acetyl-alpha-D-glucosamine 1-phosphate + UTP + H(+) = UDP-N-acetyl-alpha-D-glucosamine + diphosphate. Its pathway is nucleotide-sugar biosynthesis; UDP-N-acetyl-alpha-D-glucosamine biosynthesis; N-acetyl-alpha-D-glucosamine 1-phosphate from alpha-D-glucosamine 6-phosphate (route II): step 2/2. The protein operates within nucleotide-sugar biosynthesis; UDP-N-acetyl-alpha-D-glucosamine biosynthesis; UDP-N-acetyl-alpha-D-glucosamine from N-acetyl-alpha-D-glucosamine 1-phosphate: step 1/1. It functions in the pathway bacterial outer membrane biogenesis; LPS lipid A biosynthesis. In terms of biological role, catalyzes the last two sequential reactions in the de novo biosynthetic pathway for UDP-N-acetylglucosamine (UDP-GlcNAc). The C-terminal domain catalyzes the transfer of acetyl group from acetyl coenzyme A to glucosamine-1-phosphate (GlcN-1-P) to produce N-acetylglucosamine-1-phosphate (GlcNAc-1-P), which is converted into UDP-GlcNAc by the transfer of uridine 5-monophosphate (from uridine 5-triphosphate), a reaction catalyzed by the N-terminal domain. In Staphylococcus aureus (strain Mu50 / ATCC 700699), this protein is Bifunctional protein GlmU.